Here is a 241-residue protein sequence, read N- to C-terminus: 1-(5-phosphoribosyl)-5-[(5-phosphoribosylamino)methylideneamino] imidazole-4-carboxamide isomerase (241 aa).

Residue Asp11 is the Proton acceptor of the active site. Catalysis depends on Asp130, which acts as the Proton donor.

It belongs to the HisA/HisF family.

The protein localises to the cytoplasm. It carries out the reaction 1-(5-phospho-beta-D-ribosyl)-5-[(5-phospho-beta-D-ribosylamino)methylideneamino]imidazole-4-carboxamide = 5-[(5-phospho-1-deoxy-D-ribulos-1-ylimino)methylamino]-1-(5-phospho-beta-D-ribosyl)imidazole-4-carboxamide. The protein operates within amino-acid biosynthesis; L-histidine biosynthesis; L-histidine from 5-phospho-alpha-D-ribose 1-diphosphate: step 4/9. The protein is 1-(5-phosphoribosyl)-5-[(5-phosphoribosylamino)methylideneamino] imidazole-4-carboxamide isomerase of Acidothermus cellulolyticus (strain ATCC 43068 / DSM 8971 / 11B).